A 265-amino-acid polypeptide reads, in one-letter code: Enolase-phosphatase E1 (265 aa).

Mg(2+) is bound by residues Asp-18 and Glu-20. Substrate is bound by residues 144-145 (SS) and Lys-188. Asp-215 contacts Mg(2+).

Belongs to the HAD-like hydrolase superfamily. MasA/MtnC family. As to quaternary structure, monomer. It depends on Mg(2+) as a cofactor.

It localises to the cytoplasm. Its subcellular location is the nucleus. It carries out the reaction 5-methylsulfanyl-2,3-dioxopentyl phosphate + H2O = 1,2-dihydroxy-5-(methylsulfanyl)pent-1-en-3-one + phosphate. The protein operates within amino-acid biosynthesis; L-methionine biosynthesis via salvage pathway; L-methionine from S-methyl-5-thio-alpha-D-ribose 1-phosphate: step 3/6. Its pathway is amino-acid biosynthesis; L-methionine biosynthesis via salvage pathway; L-methionine from S-methyl-5-thio-alpha-D-ribose 1-phosphate: step 4/6. In terms of biological role, bifunctional enzyme that catalyzes the enolization of 2,3-diketo-5-methylthiopentyl-1-phosphate (DK-MTP-1-P) into the intermediate 2-hydroxy-3-keto-5-methylthiopentenyl-1-phosphate (HK-MTPenyl-1-P), which is then dephosphorylated to form the acireductone 1,2-dihydroxy-3-keto-5-methylthiopentene (DHK-MTPene). In Candida albicans (strain SC5314 / ATCC MYA-2876) (Yeast), this protein is Enolase-phosphatase E1.